We begin with the raw amino-acid sequence, 250 residues long: Large ribosomal subunit protein uL29m (250 aa).

The N-terminal 24 residues, 1–24, are a transit peptide targeting the mitochondrion; sequence MRPGAASIRTTGSVLAFLVPSAQC. Residues 66–86 are disordered; sequence VLSKKGSGDQPPKPVPITEKV.

Belongs to the universal ribosomal protein uL29 family. Component of the mitochondrial large ribosomal subunit. Mature mitochondrial ribosomes consist of a small (37S) and a large (54S) subunit. The 37S subunit contains at least 33 different proteins and 1 molecule of RNA (15S). The 54S subunit contains at least 45 different proteins and 1 molecule of RNA (21S).

The protein resides in the mitochondrion. The polypeptide is Large ribosomal subunit protein uL29m (MRPL4) (Phaeosphaeria nodorum (strain SN15 / ATCC MYA-4574 / FGSC 10173) (Glume blotch fungus)).